Consider the following 44-residue polypeptide: Photosystem I reaction center subunit IX (44 aa).

Residues 7-27 (YLSVAPVLSTLWFGALAGLLI) form a helical membrane-spanning segment.

It belongs to the PsaJ family.

Its subcellular location is the plastid. It is found in the chloroplast thylakoid membrane. Its function is as follows. May help in the organization of the PsaE and PsaF subunits. This chain is Photosystem I reaction center subunit IX, found in Eucalyptus globulus subsp. globulus (Tasmanian blue gum).